Reading from the N-terminus, the 213-residue chain is Redox-sensing transcriptional repressor Rex (213 aa).

A DNA-binding region (H-T-H motif) is located at residues 18–57 (LYYRIFKRFHAEKIERANSKQIAEAIGIDSATVRRDFSYF). An NAD(+)-binding site is contributed by 92-97 (GIGNMG).

Belongs to the transcriptional regulatory Rex family. As to quaternary structure, homodimer.

It is found in the cytoplasm. Functionally, modulates transcription in response to changes in cellular NADH/NAD(+) redox state. Binds to the promoter of the aldehyde-alcohol dehydrogenase adhE gene. Functions as a redox-dependent repressor of adhE expression. This is Redox-sensing transcriptional repressor Rex from Streptococcus pneumoniae serotype 19F (strain G54).